The primary structure comprises 344 residues: GTP 3',8-cyclase (344 aa).

Residues 19-239 (PFGRTIDYLR…ANYTLTDLPD (221 aa)) form the Radical SAM core domain. Arg-28 is a GTP binding site. [4Fe-4S] cluster-binding residues include Cys-35 and Cys-39. Residue Tyr-41 participates in S-adenosyl-L-methionine binding. Position 42 (Cys-42) interacts with [4Fe-4S] cluster. Arg-77 serves as a coordination point for GTP. Gly-81 is a binding site for S-adenosyl-L-methionine. Thr-111 contacts GTP. Ser-135 is an S-adenosyl-L-methionine binding site. Lys-171 contacts GTP. Met-205 serves as a coordination point for S-adenosyl-L-methionine. [4Fe-4S] cluster-binding residues include Cys-268 and Cys-271. Residue 273–275 (RVR) participates in GTP binding. Cys-285 is a [4Fe-4S] cluster binding site.

This sequence belongs to the radical SAM superfamily. MoaA family. In terms of assembly, monomer and homodimer. It depends on [4Fe-4S] cluster as a cofactor.

It carries out the reaction GTP + AH2 + S-adenosyl-L-methionine = (8S)-3',8-cyclo-7,8-dihydroguanosine 5'-triphosphate + 5'-deoxyadenosine + L-methionine + A + H(+). The protein operates within cofactor biosynthesis; molybdopterin biosynthesis. Functionally, catalyzes the cyclization of GTP to (8S)-3',8-cyclo-7,8-dihydroguanosine 5'-triphosphate. In Rhodopseudomonas palustris (strain ATCC BAA-98 / CGA009), this protein is GTP 3',8-cyclase.